The primary structure comprises 252 residues: Octanoyltransferase (252 aa).

Residues 1 to 21 are compositionally biased toward low complexity; sequence MPSAPAAPAAPAAPDAAASVA. Positions 1-22 are disordered; that stretch reads MPSAPAAPAAPAAPDAAASVAP. A BPL/LPL catalytic domain is found at 56 to 237; that stretch reads PDTDDEIWVV…RLIAHLDGAT (182 aa). Substrate-binding positions include 96–103, 168–170, and 181–183; these read RGGQITYH, ALG, and GLS. Cysteine 199 serves as the catalytic Acyl-thioester intermediate.

Belongs to the LipB family.

It localises to the cytoplasm. It carries out the reaction octanoyl-[ACP] + L-lysyl-[protein] = N(6)-octanoyl-L-lysyl-[protein] + holo-[ACP] + H(+). Its pathway is protein modification; protein lipoylation via endogenous pathway; protein N(6)-(lipoyl)lysine from octanoyl-[acyl-carrier-protein]: step 1/2. Its function is as follows. Catalyzes the transfer of endogenously produced octanoic acid from octanoyl-acyl-carrier-protein onto the lipoyl domains of lipoate-dependent enzymes. Lipoyl-ACP can also act as a substrate although octanoyl-ACP is likely to be the physiological substrate. In Burkholderia pseudomallei (strain 668), this protein is Octanoyltransferase.